The sequence spans 137 residues: Ribonuclease VapC51 (137 aa).

The 116-residue stretch at 5–120 folds into the PINc domain; the sequence is YLLDTSVIKR…HYDADFDLIA (116 aa). Mg(2+) contacts are provided by Asp8 and Asp95.

The protein belongs to the PINc/VapC protein family. It depends on Mg(2+) as a cofactor.

Its function is as follows. Toxic component of a type II toxin-antitoxin (TA) system. An RNase. Its cognate antitoxin is VapB51. This chain is Ribonuclease VapC51, found in Mycobacterium tuberculosis (strain ATCC 25618 / H37Rv).